A 152-amino-acid chain; its full sequence is Superoxide dismutase [Cu-Zn] 2 (152 aa).

Residues histidine 45, histidine 47, and histidine 62 each coordinate Cu cation. Cysteines 56 and 145 form a disulfide. Zn(2+)-binding residues include histidine 62, histidine 70, histidine 79, and aspartate 82. Histidine 119 contributes to the Cu cation binding site.

This sequence belongs to the Cu-Zn superoxide dismutase family. As to quaternary structure, homodimer. The cofactor is Cu cation. Zn(2+) serves as cofactor.

It localises to the cytoplasm. The catalysed reaction is 2 superoxide + 2 H(+) = H2O2 + O2. Functionally, destroys radicals which are normally produced within the cells and which are toxic to biological systems. In Oryza sativa subsp. japonica (Rice), this protein is Superoxide dismutase [Cu-Zn] 2 (SODCC2).